The sequence spans 85 residues: UPF0291 protein SGO_0570 (85 aa).

The tract at residues 56–85 (EDGNDVTPEKLRQVQREKGLHGRSLDDPNS) is disordered. Positions 62–85 (TPEKLRQVQREKGLHGRSLDDPNS) are enriched in basic and acidic residues.

It belongs to the UPF0291 family.

It is found in the cytoplasm. This is UPF0291 protein SGO_0570 from Streptococcus gordonii (strain Challis / ATCC 35105 / BCRC 15272 / CH1 / DL1 / V288).